A 416-amino-acid chain; its full sequence is Tyrosine--tRNA ligase (416 aa).

Residue Y41 coordinates L-tyrosine. The 'HIGH' region signature appears at 46–55 (ATASSLHAGH). 2 residues coordinate L-tyrosine: Y175 and Q179. The 'KMSKS' region motif lies at 235–239 (KMGKT). K238 serves as a coordination point for ATP. The S4 RNA-binding domain maps to 349–416 (LPVAKAFVDA…KKKHVLLKPV (68 aa)).

Belongs to the class-I aminoacyl-tRNA synthetase family. TyrS type 1 subfamily. Homodimer.

Its subcellular location is the cytoplasm. It catalyses the reaction tRNA(Tyr) + L-tyrosine + ATP = L-tyrosyl-tRNA(Tyr) + AMP + diphosphate + H(+). Catalyzes the attachment of tyrosine to tRNA(Tyr) in a two-step reaction: tyrosine is first activated by ATP to form Tyr-AMP and then transferred to the acceptor end of tRNA(Tyr). The polypeptide is Tyrosine--tRNA ligase (Xanthobacter autotrophicus (strain ATCC BAA-1158 / Py2)).